A 445-amino-acid polypeptide reads, in one-letter code: MIHGKTLEAWQQSHPIIADLVALKETSWFNPGIAQASEALRDVGLTAADVQAASARLQRFAPYLATVFPETAPAGGIIESHIAPLPLLRQRLIEEGALRNAGSLWLKADSDLPVSGSIKARGGIHEVLKHAEDLALAAGLITPTDDYTRLASEQARAFFGQYKIAVGSTGNLGLSIGIMSAKLGFQVSVHMSSDARQWKKDKLRANGVTVVEHASDYSVAVEQGRQQAAADPSCYFVDDENSPQLFLGYAVAAERLALQFDQAGIQVDADHPLFVYLPCGVGGGPGGVAFGLKLVFGDAVHCIFAEPTHSPCMLLGVYTGLHDETSVQDFGIDNITAADGLAVGRPSGFVGKAMQRLIDGYYTVTDEALYRLMVIAHEQDKVKLEPSALAGVPGMLRVLQADEYLARQGFTPTQLQQATHLVWGTGGSMVPEDEFNAYLAKGRSV.

K119 carries the N6-(pyridoxal phosphate)lysine modification.

Belongs to the serine/threonine dehydratase family. DsdA subfamily. Requires pyridoxal 5'-phosphate as cofactor.

The catalysed reaction is D-serine = pyruvate + NH4(+). In Pseudomonas putida (strain GB-1), this protein is Probable D-serine dehydratase.